The following is a 628-amino-acid chain: 1-deoxy-D-xylulose-5-phosphate synthase (628 aa).

Thiamine diphosphate is bound by residues H77 and 118–120 (GHS). Residue D150 coordinates Mg(2+). Thiamine diphosphate-binding positions include 151–152 (GA), N180, Y288, and E369. N180 is a Mg(2+) binding site.

This sequence belongs to the transketolase family. DXPS subfamily. Homodimer. It depends on Mg(2+) as a cofactor. Thiamine diphosphate is required as a cofactor.

It carries out the reaction D-glyceraldehyde 3-phosphate + pyruvate + H(+) = 1-deoxy-D-xylulose 5-phosphate + CO2. Its pathway is metabolic intermediate biosynthesis; 1-deoxy-D-xylulose 5-phosphate biosynthesis; 1-deoxy-D-xylulose 5-phosphate from D-glyceraldehyde 3-phosphate and pyruvate: step 1/1. Its function is as follows. Catalyzes the acyloin condensation reaction between C atoms 2 and 3 of pyruvate and glyceraldehyde 3-phosphate to yield 1-deoxy-D-xylulose-5-phosphate (DXP). The polypeptide is 1-deoxy-D-xylulose-5-phosphate synthase (Aquifex aeolicus (strain VF5)).